The chain runs to 336 residues: MGKVLLELHSVPWNEEGLSDNARLYSFLEFVSPKIEELKYRKLLLEKLQTHIREVVLDAELQVYGSMYIGTTLSISDVDVSLKSPRVGELEKRRVTMVLRKYLDADADFHSSARVPRINLVDVSGIGVDLTFGNDKACRTAELQKAYNEEHPIFGRLLMLLKHWLFERDLENVHHGGIASCALSYMLIGWLEMRFHKKGIDSEVQPIRALLQKFFYFWGVEWTYELFVLRPLTGQIVPKLQKGWLNEVQPNLLSIEDPIDRNNDIGKQSFQISMIKAAFVASANELLSDKTWFSTFAITEDEMFLCKQFENVINTKRSLVEGYDSDTESDELQAGG.

Mg(2+)-binding residues include Asp-77 and Asp-79. Residues 209–263 (ALLQKFFYFWGVEWTYELFVLRPLTGQIVPKLQKGWLNEVQPNLLSIEDPIDRNN) form the PAP-associated domain. Ser-325 is subject to Phosphoserine. Position 327 is a phosphothreonine (Thr-327). Ser-329 bears the Phosphoserine mark.

It belongs to the DNA polymerase type-B-like family. In terms of assembly, cid12, hrr1 and rdp1 interact forming the RNA-directed RNA polymerase complex (RDRC). The RDRC complex interacts with the RITS complex via interaction between ago1 and hrr1. Clr4 has a role in mediating this interaction. The cofactor is Mg(2+). Mn(2+) is required as a cofactor.

It is found in the cytoplasm. The protein localises to the nucleus. The enzyme catalyses RNA(n) + ATP = RNA(n)-3'-adenine ribonucleotide + diphosphate. Has a role in the RNA interference (RNAi) pathway which is important for heterochromatin formation and accurate chromosome segregation. A member of the RNA-directed RNA polymerase complex (RDRC) which is involved in the generation of small interfering RNAs (siRNAs) and mediate their association with the RNA-induced transcriptional silencing (RITS) complex. RITS acts as a priming complex for dsRNA synthesis at the site of non-coding centromeric RNA. In Schizosaccharomyces pombe (strain 972 / ATCC 24843) (Fission yeast), this protein is Poly(A) RNA polymerase cid12 (cid12).